The following is a 217-amino-acid chain: Peptide deformylase 1 (217 aa).

Fe cation-binding residues include Cys129 and His171. The active site involves Glu172. His175 lines the Fe cation pocket.

This sequence belongs to the polypeptide deformylase family. Fe(2+) is required as a cofactor.

The catalysed reaction is N-terminal N-formyl-L-methionyl-[peptide] + H2O = N-terminal L-methionyl-[peptide] + formate. Removes the formyl group from the N-terminal Met of newly synthesized proteins. Requires at least a dipeptide for an efficient rate of reaction. N-terminal L-methionine is a prerequisite for activity but the enzyme has broad specificity at other positions. The polypeptide is Peptide deformylase 1 (Bifidobacterium longum (strain NCC 2705)).